We begin with the raw amino-acid sequence, 867 residues long: DNA mismatch repair protein MutS (867 aa).

609–616 (GPNMSGKS) contacts ATP.

Belongs to the DNA mismatch repair MutS family.

Its function is as follows. This protein is involved in the repair of mismatches in DNA. It is possible that it carries out the mismatch recognition step. This protein has a weak ATPase activity. The sequence is that of DNA mismatch repair protein MutS from Latilactobacillus sakei subsp. sakei (strain 23K) (Lactobacillus sakei subsp. sakei).